The sequence spans 379 residues: 3-dehydroquinate synthase (379 aa).

Residues 67–72, 101–105, 125–126, Lys-138, and Lys-147 contribute to the NAD(+) site; these read SGEKNK, GVVLD, and TT. The Zn(2+) site is built by Glu-180, His-242, and His-258.

It belongs to the sugar phosphate cyclases superfamily. Dehydroquinate synthase family. The cofactor is NAD(+). Co(2+) is required as a cofactor. It depends on Zn(2+) as a cofactor.

It is found in the cytoplasm. The catalysed reaction is 7-phospho-2-dehydro-3-deoxy-D-arabino-heptonate = 3-dehydroquinate + phosphate. Its pathway is metabolic intermediate biosynthesis; chorismate biosynthesis; chorismate from D-erythrose 4-phosphate and phosphoenolpyruvate: step 2/7. In terms of biological role, catalyzes the conversion of 3-deoxy-D-arabino-heptulosonate 7-phosphate (DAHP) to dehydroquinate (DHQ). The chain is 3-dehydroquinate synthase from Chlamydia abortus (strain DSM 27085 / S26/3) (Chlamydophila abortus).